The sequence spans 152 residues: Protein SprT-like (152 aa).

In terms of domain architecture, SprT-like spans 7-147 (QRLVEEVSLQ…CGKCKGKLKP (141 aa)). Residue histidine 67 coordinates Zn(2+). The active site involves glutamate 68. Histidine 71 is a binding site for Zn(2+).

Belongs to the SprT family. The cofactor is Zn(2+).

Its subcellular location is the cytoplasm. The sequence is that of Protein SprT-like from Bacillus cereus (strain B4264).